Consider the following 128-residue polypeptide: Ribonuclease pancreatic (128 aa).

Positions lysine 1–methionine 13 are enriched in basic and acidic residues. The interval lysine 1–cysteine 26 is disordered. Residues lysine 7 and arginine 10 each coordinate substrate. Histidine 12 (proton acceptor) is an active-site residue. Over residues aspartate 14–cysteine 26 the composition is skewed to polar residues. 4 disulfides stabilise this stretch: cysteine 26–cysteine 84, cysteine 40–cysteine 95, cysteine 58–cysteine 110, and cysteine 65–cysteine 72. The N-linked (GlcNAc...) asparagine glycan is linked to asparagine 34. Residue lysine 41–threonine 45 coordinates substrate. A glycan (N-linked (GlcNAc...) asparagine) is linked at asparagine 62. 2 residues coordinate substrate: lysine 66 and arginine 85. The active-site Proton donor is the histidine 119.

This sequence belongs to the pancreatic ribonuclease family. As to quaternary structure, monomer. Interacts with and forms tight 1:1 complexes with RNH1. Dimerization of two such complexes may occur. Interaction with RNH1 inhibits this protein. Pancreas.

The protein resides in the secreted. The enzyme catalyses an [RNA] containing cytidine + H2O = an [RNA]-3'-cytidine-3'-phosphate + a 5'-hydroxy-ribonucleotide-3'-[RNA].. The catalysed reaction is an [RNA] containing uridine + H2O = an [RNA]-3'-uridine-3'-phosphate + a 5'-hydroxy-ribonucleotide-3'-[RNA].. In terms of biological role, endonuclease that catalyzes the cleavage of RNA on the 3' side of pyrimidine nucleotides. Acts on single-stranded and double-stranded RNA. This chain is Ribonuclease pancreatic (RNASE1), found in Equus caballus (Horse).